The chain runs to 205 residues: Thymidylate kinase (205 aa).

Gly10 to Ser17 contributes to the ATP binding site.

The protein belongs to the thymidylate kinase family.

It carries out the reaction dTMP + ATP = dTDP + ADP. Its function is as follows. Phosphorylation of dTMP to form dTDP in both de novo and salvage pathways of dTTP synthesis. This is Thymidylate kinase from Ralstonia nicotianae (strain ATCC BAA-1114 / GMI1000) (Ralstonia solanacearum).